A 1065-amino-acid polypeptide reads, in one-letter code: Carbamoyl phosphate synthase large chain (1065 aa).

A carboxyphosphate synthetic domain region spans residues 1–401 (MPKRRDIETI…SLLKAVRSLE (401 aa)). Arg-129, Arg-169, Gly-175, Gly-176, Arg-208, Ile-210, Glu-215, Gly-241, Ile-242, His-243, Gln-284, and Glu-298 together coordinate ATP. Residues 133–327 (RALMNELGEP…IAKLAAKIAV (195 aa)) form the ATP-grasp 1 domain. Mg(2+) is bound by residues Gln-284, Glu-298, and Asn-300. Mn(2+) is bound by residues Gln-284, Glu-298, and Asn-300. Residues 402–546 (IGVHHLELNE…YSTYEEENES (145 aa)) form an oligomerization domain region. The carbamoyl phosphate synthetic domain stretch occupies residues 547–929 (IVTEKPSVIV…ALYKGLVASG (383 aa)). One can recognise an ATP-grasp 2 domain in the interval 671 to 861 (EQALSELGIP…MANLATKAIL (191 aa)). ATP is bound by residues Arg-707, Arg-746, Ile-748, Glu-752, Gly-777, Val-778, His-779, Ser-780, Gln-820, and Glu-832. Mg(2+) contacts are provided by Gln-820, Glu-832, and Asn-834. The Mn(2+) site is built by Gln-820, Glu-832, and Asn-834. In terms of domain architecture, MGS-like spans 930 to 1065 (IHIQPHGAVL…TAMTEGLVRS (136 aa)). The segment at 930-1065 (IHIQPHGAVL…TAMTEGLVRS (136 aa)) is allosteric domain.

Belongs to the CarB family. As to quaternary structure, composed of two chains; the small (or glutamine) chain promotes the hydrolysis of glutamine to ammonia, which is used by the large (or ammonia) chain to synthesize carbamoyl phosphate. Tetramer of heterodimers (alpha,beta)4. It depends on Mg(2+) as a cofactor. The cofactor is Mn(2+).

It catalyses the reaction hydrogencarbonate + L-glutamine + 2 ATP + H2O = carbamoyl phosphate + L-glutamate + 2 ADP + phosphate + 2 H(+). The catalysed reaction is hydrogencarbonate + NH4(+) + 2 ATP = carbamoyl phosphate + 2 ADP + phosphate + 2 H(+). Its pathway is amino-acid biosynthesis; L-arginine biosynthesis; carbamoyl phosphate from bicarbonate: step 1/1. The protein operates within pyrimidine metabolism; UMP biosynthesis via de novo pathway; (S)-dihydroorotate from bicarbonate: step 1/3. Large subunit of the glutamine-dependent carbamoyl phosphate synthetase (CPSase). CPSase catalyzes the formation of carbamoyl phosphate from the ammonia moiety of glutamine, carbonate, and phosphate donated by ATP, constituting the first step of 2 biosynthetic pathways, one leading to arginine and/or urea and the other to pyrimidine nucleotides. The large subunit (synthetase) binds the substrates ammonia (free or transferred from glutamine from the small subunit), hydrogencarbonate and ATP and carries out an ATP-coupled ligase reaction, activating hydrogencarbonate by forming carboxy phosphate which reacts with ammonia to form carbamoyl phosphate. This chain is Carbamoyl phosphate synthase large chain, found in Bacillus caldolyticus.